We begin with the raw amino-acid sequence, 431 residues long: Keratin, type I cytoskeletal 40 (431 aa).

Residues 1–89 form a head region; that stretch reads MASEGSPDCC…CEEGTFNSNE (89 aa). Positions 89–400 constitute an IF rod domain; that stretch reads EKETMQFLND…GLLEKEDSRL (312 aa). The segment at 90 to 124 is coil 1A; the sequence is KETMQFLNDRLASYLERVRSLEENNAELECRIREQ. Residues 125–135 are linker 1; sequence CEPDATPVCPD. Positions 136–236 are coil 1B; sequence YQRYFDTIEE…HEEEVNLLRE (101 aa). The interval 237-252 is linker 12; sequence QLGDRLNVELDTAPTV. The segment at 253-396 is coil 2; the sequence is DLNKVLDEMR…NTYRGLLEKE (144 aa). The tract at residues 397–431 is tail; the sequence is DSRLPCNPGSTASISNSACEPCSAYVICTVENCCA.

The protein belongs to the intermediate filament family. In terms of assembly, heterotetramer of two type I and two type II keratins.

In terms of biological role, may play a role in late hair differentiation. The protein is Keratin, type I cytoskeletal 40 (Krt40) of Rattus norvegicus (Rat).